The sequence spans 1064 residues: Carbamoyl phosphate synthase pyrimidine-specific large chain (1064 aa).

The tract at residues 1–401 (MPKRRDIETI…SLLKAVRSLE (401 aa)) is carboxyphosphate synthetic domain. 11 residues coordinate ATP: arginine 129, arginine 169, glycine 175, glycine 176, arginine 208, isoleucine 210, glycine 241, isoleucine 242, histidine 243, glutamine 284, and glutamate 298. The ATP-grasp 1 domain maps to 133–327 (RALMNELGEP…IAKLAAKIAV (195 aa)). 3 residues coordinate Mg(2+): glutamine 284, glutamate 298, and asparagine 300. Positions 284, 298, and 300 each coordinate Mn(2+). Residues 402–546 (IGVHHLELNE…YSTYEEENES (145 aa)) form an oligomerization domain region. The segment at 547–929 (IVTEKPSVIV…ALYKGLVASG (383 aa)) is carbamoyl phosphate synthetic domain. Residues 671 to 861 (EQALSELGIP…MANLATKAIL (191 aa)) enclose the ATP-grasp 2 domain. Residues arginine 707, arginine 746, isoleucine 748, glutamate 752, glycine 777, valine 778, histidine 779, serine 780, glutamine 820, and glutamate 832 each coordinate ATP. Positions 820, 832, and 834 each coordinate Mg(2+). Mn(2+) is bound by residues glutamine 820, glutamate 832, and asparagine 834. The region spanning 930–1064 (IQIQPHGAVL…TAMTEGLVRS (135 aa)) is the MGS-like domain. An allosteric domain region spans residues 930-1064 (IQIQPHGAVL…TAMTEGLVRS (135 aa)).

It belongs to the CarB family. Composed of two chains; the small (or glutamine) chain promotes the hydrolysis of glutamine to ammonia, which is used by the large (or ammonia) chain to synthesize carbamoyl phosphate. Tetramer of heterodimers (alpha,beta)4. It depends on Mg(2+) as a cofactor. Mn(2+) serves as cofactor.

It carries out the reaction hydrogencarbonate + L-glutamine + 2 ATP + H2O = carbamoyl phosphate + L-glutamate + 2 ADP + phosphate + 2 H(+). The enzyme catalyses hydrogencarbonate + NH4(+) + 2 ATP = carbamoyl phosphate + 2 ADP + phosphate + 2 H(+). The protein operates within amino-acid biosynthesis; L-arginine biosynthesis; carbamoyl phosphate from bicarbonate: step 1/1. It functions in the pathway pyrimidine metabolism; UMP biosynthesis via de novo pathway; (S)-dihydroorotate from bicarbonate: step 1/3. Its function is as follows. Small subunit of the glutamine-dependent carbamoyl phosphate synthetase (CPSase). CPSase catalyzes the formation of carbamoyl phosphate from the ammonia moiety of glutamine, carbonate, and phosphate donated by ATP, constituting the first step of the biosynthetic pathway leading to pyrimidine nucleotides. The large subunit (synthetase) binds the substrates ammonia (free or transferred from glutamine from the small subunit), hydrogencarbonate and ATP and carries out an ATP-coupled ligase reaction, activating hydrogencarbonate by forming carboxy phosphate which reacts with ammonia to form carbamoyl phosphate. This Geobacillus stearothermophilus (Bacillus stearothermophilus) protein is Carbamoyl phosphate synthase pyrimidine-specific large chain (pyrAB).